The primary structure comprises 463 residues: Sodium-coupled neutral amino acid transporter 7 (463 aa).

Ser-28 carries the post-translational modification Phosphoserine. Helical transmembrane passes span Ala-56 to Phe-76, Val-82 to Ile-102, Leu-130 to Ile-150, Phe-179 to Gly-199, Ser-206 to Pro-226, Ala-240 to Val-260, Ala-283 to Phe-303, Val-320 to Leu-340, Val-372 to Ile-392, Ile-396 to Ile-416, and Ala-429 to Phe-449.

The protein belongs to the amino acid/polyamine transporter 2 family. Interacts with the mTORC1 complex; this interaction mediates the recruitment of mTORC1 to the lysosome and its subsequent activation.

Its subcellular location is the lysosome membrane. It is found in the cell projection. The protein localises to the axon. It carries out the reaction L-asparagine(in) + Na(+)(in) = L-asparagine(out) + Na(+)(out). The enzyme catalyses L-glutamine(in) + Na(+)(in) = L-glutamine(out) + Na(+)(out). Symporter that selectively cotransports sodium ions and amino acids, such as L-glutamine and L-asparagine from the lysosome into the cytoplasm and may participates in mTORC1 activation. The transport activity requires an acidic lysosomal lumen. The sequence is that of Sodium-coupled neutral amino acid transporter 7 from Rattus norvegicus (Rat).